The following is a 326-amino-acid chain: Beta-ketoacyl-[acyl-carrier-protein] synthase III (326 aa).

Active-site residues include C113 and H253. Positions 254 to 258 (QANIR) are ACP-binding. Residue N283 is part of the active site.

Belongs to the thiolase-like superfamily. FabH family. Homodimer.

It is found in the cytoplasm. The enzyme catalyses malonyl-[ACP] + acetyl-CoA + H(+) = 3-oxobutanoyl-[ACP] + CO2 + CoA. Its pathway is lipid metabolism; fatty acid biosynthesis. Its function is as follows. Catalyzes the condensation reaction of fatty acid synthesis by the addition to an acyl acceptor of two carbons from malonyl-ACP. Catalyzes the first condensation reaction which initiates fatty acid synthesis and may therefore play a role in governing the total rate of fatty acid production. Possesses both acetoacetyl-ACP synthase and acetyl transacylase activities. Its substrate specificity determines the biosynthesis of branched-chain and/or straight-chain of fatty acids. This chain is Beta-ketoacyl-[acyl-carrier-protein] synthase III, found in Wolbachia sp. subsp. Brugia malayi (strain TRS).